The chain runs to 305 residues: Methionyl-tRNA formyltransferase (305 aa).

A (6S)-5,6,7,8-tetrahydrofolate-binding site is contributed by 108 to 111 (SLLP).

It belongs to the Fmt family.

It catalyses the reaction L-methionyl-tRNA(fMet) + (6R)-10-formyltetrahydrofolate = N-formyl-L-methionyl-tRNA(fMet) + (6S)-5,6,7,8-tetrahydrofolate + H(+). In terms of biological role, attaches a formyl group to the free amino group of methionyl-tRNA(fMet). The formyl group appears to play a dual role in the initiator identity of N-formylmethionyl-tRNA by promoting its recognition by IF2 and preventing the misappropriation of this tRNA by the elongation apparatus. This Thermus thermophilus (strain ATCC BAA-163 / DSM 7039 / HB27) protein is Methionyl-tRNA formyltransferase.